The sequence spans 387 residues: Succinate--CoA ligase [ADP-forming] subunit beta (387 aa).

Residues 9–245 (KDLLESYGLK…KSQENAKELK (237 aa)) form the ATP-grasp domain. ATP is bound by residues lysine 46, 53 to 55 (GRG), glutamate 100, tyrosine 103, and glutamate 108. 2 residues coordinate Mg(2+): asparagine 200 and aspartate 214. Substrate-binding positions include asparagine 265 and 322 to 324 (GIV).

Belongs to the succinate/malate CoA ligase beta subunit family. As to quaternary structure, heterotetramer of two alpha and two beta subunits. Mg(2+) serves as cofactor.

It catalyses the reaction succinate + ATP + CoA = succinyl-CoA + ADP + phosphate. The catalysed reaction is GTP + succinate + CoA = succinyl-CoA + GDP + phosphate. Its pathway is carbohydrate metabolism; tricarboxylic acid cycle; succinate from succinyl-CoA (ligase route): step 1/1. Functionally, succinyl-CoA synthetase functions in the citric acid cycle (TCA), coupling the hydrolysis of succinyl-CoA to the synthesis of either ATP or GTP and thus represents the only step of substrate-level phosphorylation in the TCA. The beta subunit provides nucleotide specificity of the enzyme and binds the substrate succinate, while the binding sites for coenzyme A and phosphate are found in the alpha subunit. The protein is Succinate--CoA ligase [ADP-forming] subunit beta of Francisella tularensis subsp. novicida (strain U112).